The sequence spans 576 residues: Urease subunit alpha (576 aa).

In terms of domain architecture, Urease spans 132–576; it reads GGVDTHIHFI…LPMAQRYFLF (445 aa). H137, H139, and K220 together coordinate Ni(2+). Position 220 is an N6-carboxylysine (K220). H222 contacts substrate. Residues H249 and H275 each coordinate Ni(2+). The active-site Proton donor is H323. Position 363 (D363) interacts with Ni(2+).

Belongs to the metallo-dependent hydrolases superfamily. Urease alpha subunit family. In terms of assembly, heterotrimer of UreA (gamma), UreB (beta) and UreC (alpha) subunits. Three heterotrimers associate to form the active enzyme. It depends on Ni cation as a cofactor. Post-translationally, carboxylation allows a single lysine to coordinate two nickel ions.

The protein localises to the cytoplasm. The catalysed reaction is urea + 2 H2O + H(+) = hydrogencarbonate + 2 NH4(+). It participates in nitrogen metabolism; urea degradation; CO(2) and NH(3) from urea (urease route): step 1/1. In Arthrobacter sp. (strain FB24), this protein is Urease subunit alpha.